Here is a 209-residue protein sequence, read N- to C-terminus: Ribonuclease HII (209 aa).

The RNase H type-2 domain occupies 18 to 209 (GLVAGVDEVG…FKPVKALLER (192 aa)). A divalent metal cation contacts are provided by aspartate 24, glutamate 25, and aspartate 116.

This sequence belongs to the RNase HII family. It depends on Mn(2+) as a cofactor. Mg(2+) serves as cofactor.

It is found in the cytoplasm. The catalysed reaction is Endonucleolytic cleavage to 5'-phosphomonoester.. In terms of biological role, endonuclease that specifically degrades the RNA of RNA-DNA hybrids. This is Ribonuclease HII from Shewanella sp. (strain ANA-3).